Consider the following 724-residue polypeptide: Phenylalanine ammonia-lyase (724 aa).

Tyr-91 acts as the Proton donor/acceptor in catalysis. The segment at residues 205–207 is a cross-link (5-imidazolinone (Ala-Gly)); that stretch reads ASG. Ser-206 bears the 2,3-didehydroalanine (Ser) mark. Positions 265, 357, 363, 393, 467, 495, and 498 each coordinate (E)-cinnamate.

The protein belongs to the PAL/histidase family. As to quaternary structure, homotetramer. Contains an active site 4-methylidene-imidazol-5-one (MIO), which is formed autocatalytically by cyclization and dehydration of residues Ala-Ser-Gly.

It is found in the cytoplasm. The catalysed reaction is L-phenylalanine = (E)-cinnamate + NH4(+). It functions in the pathway phenylpropanoid metabolism; trans-cinnamate biosynthesis; trans-cinnamate from L-phenylalanine: step 1/1. Functionally, catalyzes the non-oxidative deamination of L-phenylalanine to form trans-cinnamic acid and a free ammonium ion. Facilitates the commitment step in phenylpropanoid pathways that produce secondary metabolites such as lignins, coumarins and flavonoids. This is Phenylalanine ammonia-lyase (PAL1) from Mycosarcoma maydis (Corn smut fungus).